Reading from the N-terminus, the 816-residue chain is Pentatricopeptide repeat-containing protein At5g12100, mitochondrial (816 aa).

The transit peptide at 1–39 (MVTRLRLVSRSSRYATVKFTDSVSACSCRRLFSASTDPE) directs the protein to the mitochondrion. The disordered stretch occupies residues 34–57 (ASTDPEPESQPEQAPPTNPVTGDE). PPR repeat units lie at residues 108–142 (HDFS…GIYP), 143–177 (SSDS…DFRP), 178–212 (SKFM…RIYP), 213–247 (SVFI…RLLP), 248–282 (SLIT…HIEP), 283–317 (SLIT…GFVP), 318–352 (DAFT…GVKM), 353–387 (NAYT…GLVP), 388–422 (NEVI…GMKP), 423–457 (DHLA…GVSP), 458–492 (SVET…GTMP), 493–527 (NVVS…GVSP), 528–562 (KVRI…GIEL), 563–597 (NLVT…GLKP), 598–632 (DVFT…GIKP), 633–662 (TLKT…MSLK), 664–698 (DLLV…SIGL), 699–733 (DKTT…EMEP), 734–768 (EADT…GFLL), and 769–803 (DVCI…MLGD).

This sequence belongs to the PPR family. P subfamily.

The protein resides in the mitochondrion. The protein is Pentatricopeptide repeat-containing protein At5g12100, mitochondrial of Arabidopsis thaliana (Mouse-ear cress).